The following is a 325-amino-acid chain: Probable pectate lyase B (325 aa).

The N-terminal stretch at Met1–Ala15 is a signal peptide. Ca(2+)-binding residues include Asp132, Asp161, and Asp165. The active site involves Arg218.

It belongs to the polysaccharide lyase 1 family. Ca(2+) is required as a cofactor.

The protein localises to the secreted. It catalyses the reaction Eliminative cleavage of (1-&gt;4)-alpha-D-galacturonan to give oligosaccharides with 4-deoxy-alpha-D-galact-4-enuronosyl groups at their non-reducing ends.. Pectinolytic enzyme consist of four classes of enzymes: pectin lyase, polygalacturonase, pectin methylesterase and rhamnogalacturonase. Among pectinolytic enzymes, pectin lyase is the most important in depolymerization of pectin, since it cleaves internal glycosidic bonds of highly methylated pectins. Favors pectate, the anion, over pectin, the methyl ester. The chain is Probable pectate lyase B (plyB) from Aspergillus terreus (strain NIH 2624 / FGSC A1156).